We begin with the raw amino-acid sequence, 318 residues long: Pantothenate kinase (318 aa).

Residue 96–103 (GSVAVGKS) coordinates ATP.

The protein belongs to the prokaryotic pantothenate kinase family.

It is found in the cytoplasm. It catalyses the reaction (R)-pantothenate + ATP = (R)-4'-phosphopantothenate + ADP + H(+). It participates in cofactor biosynthesis; coenzyme A biosynthesis; CoA from (R)-pantothenate: step 1/5. This is Pantothenate kinase from Bradyrhizobium diazoefficiens (strain JCM 10833 / BCRC 13528 / IAM 13628 / NBRC 14792 / USDA 110).